We begin with the raw amino-acid sequence, 332 residues long: Sphingolipid delta(4)-desaturase DES1-like (332 aa).

3 helical membrane-spanning segments follow: residues 55 to 75 (PWAFLKITLVVILQLSTAAIL), 83 to 103 (ILSIAYFFGSFLNHNLFLAIH), and 119 to 139 (CLGIFANLPIGVPMSVTFQKY). Positions 103–107 (HELSH) match the Histidine box-1 motif. A Histidine box-2 motif is present at residues 140-144 (HLEHH). Transmembrane regions (helical) follow at residues 164-184 (LVTNIFAKTIWVFLQLFFYAL), 197-217 (WEFINFLIQIVLDVSVVLFFG), and 222-242 (AYLILSTFVGGGMHPMAGHFI). Residues 271–275 (HNEHH) carry the Histidine box-3 motif.

The protein belongs to the fatty acid desaturase type 1 family. DEGS subfamily. As to expression, specifically expressed in flowers.

Its subcellular location is the endoplasmic reticulum membrane. The catalysed reaction is an N-acylsphinganine + 2 Fe(II)-[cytochrome b5] + O2 + 2 H(+) = an N-acylsphing-4-enine + 2 Fe(III)-[cytochrome b5] + 2 H2O. Sphingolipid-delta-4-desaturase required for the biosynthesis of delta-4-unsaturated sphingolipids and derivatives. May be required for the biosynthesis of glucosylceramides. This chain is Sphingolipid delta(4)-desaturase DES1-like, found in Arabidopsis thaliana (Mouse-ear cress).